The following is a 224-amino-acid chain: Cytidylate kinase (224 aa).

11-19 (GPAAAGKST) serves as a coordination point for ATP.

The protein belongs to the cytidylate kinase family. Type 1 subfamily.

It is found in the cytoplasm. The catalysed reaction is CMP + ATP = CDP + ADP. It catalyses the reaction dCMP + ATP = dCDP + ADP. The chain is Cytidylate kinase (cmk) from Bacillus subtilis (strain 168).